A 416-amino-acid polypeptide reads, in one-letter code: Protein P47 (416 aa).

It belongs to the TULIP P47 family. In terms of assembly, part of a crude toxin extract that includes BoNTA2/NTNH, P47, OrfX2 and OrfX3; OrfX1 was not detected.

In terms of biological role, part of a botulinum neurotoxin type A2 (BoNT) locus; may be part of a progenitor toxin complex required to protect BoNT during its passage through the host gastrointestinal tract. In Clostridium botulinum (strain Kyoto / Type A2), this protein is Protein P47.